The primary structure comprises 550 residues: Chaperonin GroEL (550 aa).

ATP contacts are provided by residues threonine 29–proline 32, lysine 50, aspartate 86–threonine 90, glycine 417, and aspartate 499.

It belongs to the chaperonin (HSP60) family. In terms of assembly, forms a cylinder of 14 subunits composed of two heptameric rings stacked back-to-back. Interacts with the co-chaperonin GroES.

The protein localises to the cytoplasm. It carries out the reaction ATP + H2O + a folded polypeptide = ADP + phosphate + an unfolded polypeptide.. Functionally, together with its co-chaperonin GroES, plays an essential role in assisting protein folding. The GroEL-GroES system forms a nano-cage that allows encapsulation of the non-native substrate proteins and provides a physical environment optimized to promote and accelerate protein folding. The sequence is that of Chaperonin GroEL from Ehrlichia chaffeensis.